The chain runs to 443 residues: Thymidine phosphorylase (443 aa).

Belongs to the thymidine/pyrimidine-nucleoside phosphorylase family. Homodimer.

The catalysed reaction is thymidine + phosphate = 2-deoxy-alpha-D-ribose 1-phosphate + thymine. It participates in pyrimidine metabolism; dTMP biosynthesis via salvage pathway; dTMP from thymine: step 1/2. Its function is as follows. The enzymes which catalyze the reversible phosphorolysis of pyrimidine nucleosides are involved in the degradation of these compounds and in their utilization as carbon and energy sources, or in the rescue of pyrimidine bases for nucleotide synthesis. The polypeptide is Thymidine phosphorylase (Photobacterium profundum (strain SS9)).